The sequence spans 375 residues: MESPKNSLIPSFLYSSSSSPRSFLLDQVLNSNSNAAFEKSPSPAPRSSPTSMISRKNFLIASPTEPGKGIEMYSPAFYAACTFGGILSCGLTHMTVTPLDLVKCNMQIDPAKYKSISSGFGILLKEQGVKGFFRGWVPTLLGYSAQGACKFGFYEYFKKTYSDLAGPEYTAKYKTLIYLAGSASAEIIADIALCPFEAVKVRVQTQPGFARGMSDGFPKFIKSEGYGGLYKGLAPLWGRQIPYTMMKFASFETIVEMIYKYAIPNPKSECSKGLQLGVSFAGGYVAGVFCAIVSHPADNLVSFLNNAKGATVGDAVKKIGMVGLFTRGLPLRIVMIGTLTGAQWGLYDAFKVFVGLPTTGGVAPAPAIAATEAKA.

Residues A76–V96 form a helical membrane-spanning segment. 3 Solcar repeats span residues A76 to T160, Y173 to M257, and L274 to F353. The Mitochondrial matrix portion of the chain corresponds to T97–R134. Residues G135–Y154 traverse the membrane as a helical segment. At E155–T175 the chain is on the mitochondrial intermembrane side. A helical membrane pass occupies residues L176–F196. Residues E197 to K231 lie on the Mitochondrial matrix side of the membrane. A helical transmembrane segment spans residues G232–F251. Topologically, residues E252–K272 are mitochondrial intermembrane. Residues G273–V293 form a helical membrane-spanning segment. Over S294–R332 the chain is Mitochondrial matrix. The chain crosses the membrane as a helical span at residues I333–F353. The Mitochondrial intermembrane portion of the chain corresponds to V354–A375.

It belongs to the mitochondrial carrier (TC 2.A.29) family. As to expression, expressed in stems, leaves and flowers. Strong expression in vascular tissues.

It is found in the mitochondrion inner membrane. Functionally, transport of phosphate groups from the cytosol to the mitochondrial matrix. Mediates salt stress tolerance through an ATP-dependent pathway and via modulation of the gibberellin metabolism. This chain is Mitochondrial phosphate carrier protein 3, mitochondrial (MPT3), found in Arabidopsis thaliana (Mouse-ear cress).